Reading from the N-terminus, the 589-residue chain is METSTISFSSSSPPSPPPPQPAPGDIDAVSLGRLSRNLENLLDPAFLNCADAEIVLASGGGDPGGGAVVGVHRCILAARSRFFYDHFSSAPAPAPATAGDKPQLDLDGLVPGGRHIGRDALVAVLSYLYTGRLRSAPPEAAACLDDGCSHDACRPAIDFVVESTYAASGFQISELVSLFQRRLSDFVNKALAEDILPILVVASTCHLPELLNQCIQRVANSNLDNRYLEKRLPDDLYAKLKEFRVPDEPHSGILDPEHEKRVRNIHKALDSDDVDLVGMLLKESPVTLDDAFAIHYAAAYCEPKVLAELLKLESANVNLKNSSGYTPLHMACMRREPDIIVSLIEKGASVLERTQDGRDALTICKRLTREKDRNEKSEKCKERSKAYLCIGVLQQEIKRRPQILEDQMSAEESIATPLLVDNFHMRLLNLENRVAFARIFFPSEAKLVMRIAQADSTQEFAGLTSANFSKLKEVDLNETPTMQNRRLRERLDALTKTVELGRRYFPHCSEVLDKFLNEESTDLILLESGTAEDQQTKRMRFSELREDVRKAFTKDKAAGAAISSSTSASSSPRYETKLRPGNKKGKLSR.

Residues Met1–Asp25 are disordered. The segment covering Pro13 to Ala22 has biased composition (pro residues). A BTB domain is found at Ala52–Pro137. The C2HC NPR-type zinc finger occupies Ala140 to Arg154. Zn(2+) is bound by residues Cys143, Cys148, His150, and Cys153. ANK repeat units follow at residues Lys260–Asp290, Phe292–Leu319, and Ser323–Glu352. A salicylic acid-binding core (SBC) region spans residues Glu382 to Thr521. A salicylate-binding site is contributed by Arg433. Residues Asp555–Arg589 are disordered. Low complexity predominate over residues Ala558–Ser571. Basic residues predominate over residues Pro580–Arg589.

This sequence belongs to the plant 'ANKYRIN-BTB/POZ' family. 'NPR1-like' subfamily. In terms of assembly, interacts with TGA2.1, TGA2.2, TGA2.3, LG2, TGAL1, TGAL4, NRR, RH1, RH2 and RH3.

The protein resides in the nucleus. It participates in protein modification; protein ubiquitination. In terms of biological role, salicylic acid (SA)-binding substrate-specific adapter of an E3 ubiquitin-protein ligase complex (CUL3-RBX1-BTB) which mediates the ubiquitination and subsequent proteasomal degradation of target proteins. Involved in defense response against the bacterial blight disease caused by Xanthomonas oryzae pv. oryzae (Xoo). Plants expressing an NPR3/NH3 transgene driven by its native promoter show enhanced resistance to the Xoo pathogen, and exhibit elevated sensitivity to benzothiadiazole (BTH) treatment and enhanced induction of defense-related genes upon treatment with BTH. Intriguingly, constitutive over-expression of NPR3/NH3 with a ubiquitin promoter does not confer disease resistance to Xoo. The sequence is that of BTB/POZ domain and ankyrin repeat-containing protein NPR3 from Oryza sativa subsp. japonica (Rice).